Consider the following 122-residue polypeptide: Large ribosomal subunit protein bL17 (122 aa).

This sequence belongs to the bacterial ribosomal protein bL17 family. In terms of assembly, part of the 50S ribosomal subunit. Contacts protein L32.

This Staphylococcus carnosus (strain TM300) protein is Large ribosomal subunit protein bL17.